We begin with the raw amino-acid sequence, 237 residues long: Large ribosomal subunit protein uL2 (237 aa).

The interval 202 to 237 is disordered; sequence FGGGNRKHPGKPTTVSRNAPPGRKVGHIAARRTGKR. Residues 225 to 237 are compositionally biased toward basic residues; that stretch reads KVGHIAARRTGKR.

The protein belongs to the universal ribosomal protein uL2 family. As to quaternary structure, part of the 50S ribosomal subunit. Forms a bridge to the 30S subunit in the 70S ribosome.

Its function is as follows. One of the primary rRNA binding proteins. Required for association of the 30S and 50S subunits to form the 70S ribosome, for tRNA binding and peptide bond formation. It has been suggested to have peptidyltransferase activity; this is somewhat controversial. Makes several contacts with the 16S rRNA in the 70S ribosome. In Methanococcoides burtonii (strain DSM 6242 / NBRC 107633 / OCM 468 / ACE-M), this protein is Large ribosomal subunit protein uL2.